A 320-amino-acid polypeptide reads, in one-letter code: Glutathione synthetase (320 aa).

The ATP-grasp domain maps to 130-315 (KIFTSWFPDL…ITGMLLDYIE (186 aa)). 156–212 (WEKYQDIIIKPLDAMGGANIFRIKKNDPNFSVIVENMTNYERKYCMVQNYLPEIKLG) contributes to the ATP binding site. 2 residues coordinate Mg(2+): glutamate 286 and asparagine 288.

This sequence belongs to the prokaryotic GSH synthase family. The cofactor is Mg(2+). Mn(2+) serves as cofactor.

It catalyses the reaction gamma-L-glutamyl-L-cysteine + glycine + ATP = glutathione + ADP + phosphate + H(+). It participates in sulfur metabolism; glutathione biosynthesis; glutathione from L-cysteine and L-glutamate: step 2/2. This chain is Glutathione synthetase, found in Buchnera aphidicola subsp. Acyrthosiphon pisum (strain APS) (Acyrthosiphon pisum symbiotic bacterium).